A 388-amino-acid chain; its full sequence is Succinate--CoA ligase [ADP-forming] subunit beta (388 aa).

Residues 9–244 form the ATP-grasp domain; that stretch reads KALFAEYGLP…PSQDDAREAH (236 aa). Residues Lys-46, 53 to 55, Glu-99, Thr-102, and Glu-107 each bind ATP; that span reads GRG. Positions 199 and 213 each coordinate Mg(2+). Residues Asn-264 and 321 to 323 contribute to the substrate site; that span reads GIV.

The protein belongs to the succinate/malate CoA ligase beta subunit family. Heterotetramer of two alpha and two beta subunits. Mg(2+) is required as a cofactor.

The enzyme catalyses succinate + ATP + CoA = succinyl-CoA + ADP + phosphate. The catalysed reaction is GTP + succinate + CoA = succinyl-CoA + GDP + phosphate. It participates in carbohydrate metabolism; tricarboxylic acid cycle; succinate from succinyl-CoA (ligase route): step 1/1. Functionally, succinyl-CoA synthetase functions in the citric acid cycle (TCA), coupling the hydrolysis of succinyl-CoA to the synthesis of either ATP or GTP and thus represents the only step of substrate-level phosphorylation in the TCA. The beta subunit provides nucleotide specificity of the enzyme and binds the substrate succinate, while the binding sites for coenzyme A and phosphate are found in the alpha subunit. The chain is Succinate--CoA ligase [ADP-forming] subunit beta from Shewanella halifaxensis (strain HAW-EB4).